The sequence spans 1433 residues: MANNNSDRQGLEPRVIRTLGSQALSGPSISNRTSSSEANPHFSKNVKEAMIKTASPTPLSTPIYRIAQACDRCRSKKTRCDGKRPQCSQCAAVGFECRISDKLLRKAYPKGYTESLEERVRELEAENKRLLALCDIKEQQISLVSQSRPQTSTDNTINGNFKHDLKDAPLNLSSTNIYLLNQTVNKQLQNGKMDGDNSGSAMSPLGAPPPPPHKDHLCDGVSCTNHLHVKPTSTSLNDPTAISFEQDEAPGLPAVKALKSMTTHQRSTQLATLVSLSIPRSTEEILFIPQLLTRIRQIFGFNSKQCLYTVSLLSSLKNRLPAPRLLAPSTSTKLKEKDEDKKLDDDSAFVKRFQSTNLSEFVDLKKFLISLKFNINSFSKQSEKPANDQDDELLSLTEIKELLHLFFKFWSNQVPILNNDHFLIYFNNFVEVVKHLSTENLETNNTTKSTVTTNHEIFALKLLMMLQMGLLVKIKMEKIKYTVPKNPKAKYARLMAYYHQLSLIIPKNPYFLNMSTTSLPSLQLLSLASFYYLNVGDISAIYGVRGRIVSMAQQLRLHRCPSAVLSVHSNPVLQKFEQSERRLLFWAIYYVDVFASLQLGVPRLLKDFDIECALPISDVEYKDQLSMENEKADKKAKKIQLQGQVSSFSLQIIRFAKILGNILDSIFKRGMMDERITSEVALVHENALDNWRNQLPEMYYFQITVNGTVNLDEIRATNQRNTETKFDKKDIILFEKKILLLFYFLAKSMIHLPVIATKPLPKNVDNATKKKQSMFNNDSKGATNQDHMILDVDMTSPAIRTSSSYIILQQATNATLTIFQAINSMYLPLPLNVSRTLIRFSLLCARGSLEYTKGGALFLDNKNLLLDTIKDIENDRLLDLPGIASWHTLKLFDMSINLLLKAPNVKVERLDKFLEKKLNYYNRLMGLPPATTTSLKPLFGSQSKNSLENRQRTPNVKRENPEHEYLYGNDSNNNNNSEAGHSPMTNTTNGNKRLKYEKDAKRNAKDGGISKGENAHNFQNDTKKNMSTSNLFPFSFSNTDLTALFTHPEGPNCTNTNNGNVDVCNRASTDATDANIENLSFLNMAPFLQTGNSNIGQNTIENKPMHMDAIFSLPSNLDLMKDNMDSKPEQLEPVIKQNPENSKNNQFHQKGKSTNMEKNNLSFNNKSNYSLTKLMRLLNNDNSFSNISINNFLYQNDQNSASADPGTNKKAVTNAGANFKPPSTGSNTSQGSILGSTKHGMDNCDFNDLGNFNNFMTNVNYSGVDYDYIVDASLGLAPLLVDTPDISNTNTTSTTSNRSKNSIILDTTFNDDLDRSRMNAREVLNPTDSILSQGMVSSVSTRNTSNQRSLSSGNDSKGDSSSQENSKSATGNQLDTPSTLFQMRRTSSGPSASHRGPRRPQKNRYNTDRSKSSGGGSSNTDNVSDLFQWQNAK.

Residues 20–38 show a composition bias toward polar residues; it reads GSQALSGPSISNRTSSSEA. Residues 20 to 40 are disordered; that stretch reads GSQALSGPSISNRTSSSEANP. The zn(2)-C6 fungal-type DNA-binding region spans 70 to 97; the sequence is CDRCRSKKTRCDGKRPQCSQCAAVGFEC. The span at 936 to 946 shows a compositional bias: polar residues; it reads KPLFGSQSKNS. Disordered stretches follow at residues 936 to 1024, 1137 to 1162, 1200 to 1236, and 1324 to 1433; these read KPLF…DTKK, QNPENSKNNQFHQKGKSTNMEKNNLS, SASADPGTNKKAVTNAGANFKPPSTGSNTSQGSILGS, and LNPT…QNAK. Basic and acidic residues-rich tracts occupy residues 947–965 and 994–1005; these read LENRQRTPNVKRENPEHEY and LKYEKDAKRNAK. Polar residues-rich tracts occupy residues 1138–1162, 1221–1235, and 1326–1348; these read NPENSKNNQFHQKGKSTNMEKNNLS, PPSTGSNTSQGSILG, and PTDSILSQGMVSSVSTRNTSNQR. Residues 1349-1362 are compositionally biased toward low complexity; the sequence is SLSSGNDSKGDSSS. Composition is skewed to polar residues over residues 1363–1391 and 1418–1433; these read QENSKSATGNQLDTPSTLFQMRRTSSGPS and SNTDNVSDLFQWQNAK.

Post-translationally, could be the target of the SNF1/CAT1 - SNF4/CAT3 kinase complex.

Its subcellular location is the nucleus. Its function is as follows. Activator of the gluconeogenic enzymes FBP1 and PCK1 genes. This Saccharomyces cerevisiae (strain ATCC 204508 / S288c) (Baker's yeast) protein is Regulatory protein CAT8 (CAT8).